Reading from the N-terminus, the 489-residue chain is Acetyl-coenzyme A carboxylase carboxyl transferase subunit beta, chloroplastic (489 aa).

In terms of domain architecture, CoA carboxyltransferase N-terminal spans 225–489; the sequence is LWIQCDNCYG…FFPLNKNEIK (265 aa). Positions 229, 232, 245, and 248 each coordinate Zn(2+). The C4-type zinc finger occupies 229–248; it reads CDNCYGLKYKKVEMNVCEEC.

This sequence belongs to the AccD/PCCB family. Acetyl-CoA carboxylase is a heterohexamer composed of biotin carboxyl carrier protein, biotin carboxylase and 2 subunits each of ACCase subunit alpha and ACCase plastid-coded subunit beta (accD). Zn(2+) serves as cofactor.

It localises to the plastid. The protein resides in the chloroplast stroma. It carries out the reaction N(6)-carboxybiotinyl-L-lysyl-[protein] + acetyl-CoA = N(6)-biotinyl-L-lysyl-[protein] + malonyl-CoA. It participates in lipid metabolism; malonyl-CoA biosynthesis; malonyl-CoA from acetyl-CoA: step 1/1. Component of the acetyl coenzyme A carboxylase (ACC) complex. Biotin carboxylase (BC) catalyzes the carboxylation of biotin on its carrier protein (BCCP) and then the CO(2) group is transferred by the transcarboxylase to acetyl-CoA to form malonyl-CoA. The chain is Acetyl-coenzyme A carboxylase carboxyl transferase subunit beta, chloroplastic from Brassica napus (Rape).